Reading from the N-terminus, the 252-residue chain is Major prion protein (252 aa).

Residues 1–22 (MANLGCWMLVLFVATWSDLGLC) form the signal peptide. The segment at 23 to 38 (KKRPKPGGWNTGGSRY) is interaction with ADGRG6. Residues 23–229 (KKRPKPGGWN…ESQAYYQRGS (207 aa)) form an interaction with GRB2, ERI3 and SYN1 region. The segment at 26-106 (PKPGGWNTGG…QWNKPSKPKT (81 aa)) is disordered. 5 repeat units span residues 51 to 58 (PQGGGWGQ), 59 to 66 (PHGGGWGQ), 67 to 74 (PHGGGWGQ), 75 to 82 (PHGGSWGQ), and 83 to 90 (PHGGGWGQ). The tract at residues 51–90 (PQGGGWGQPHGGGWGQPHGGGWGQPHGGSWGQPHGGGWGQ) is 5 X 8 AA tandem repeats of P-H-G-G-G-W-G-Q. Positions 52–94 (QGGGWGQPHGGGWGQPHGGGWGQPHGGSWGQPHGGGWGQGGGT) are enriched in gly residues. Residues His-60, Gly-61, Gly-62, His-68, Gly-69, Gly-70, His-76, Gly-77, Gly-78, His-84, Gly-85, and Gly-86 each coordinate Cu(2+). A disulfide bridge connects residues Cys-178 and Cys-213. N-linked (GlcNAc...) asparagine glycosylation is found at Asn-180 and Asn-196. Residue Ser-229 is the site of GPI-anchor amidated serine attachment. A propeptide spans 230 to 252 (SMVLFSSPPVILLISFLIFLIVG) (removed in mature form).

It belongs to the prion family. In terms of assembly, monomer and homodimer. Has a tendency to aggregate into amyloid fibrils containing a cross-beta spine, formed by a steric zipper of superposed beta-strands. Soluble oligomers may represent an intermediate stage on the path to fibril formation. Copper binding may promote oligomerization. Interacts with GRB2, APP, ERI3/PRNPIP and SYN1. Mislocalized cytosolically exposed PrP interacts with MGRN1; this interaction alters MGRN1 subcellular location and causes lysosomal enlargement. Interacts with APP. Interacts with KIAA1191. Interacts with ADGRG6.

It is found in the cell membrane. The protein localises to the golgi apparatus. In terms of biological role, its primary physiological function is unclear. May play a role in neuronal development and synaptic plasticity. May be required for neuronal myelin sheath maintenance. May promote myelin homeostasis through acting as an agonist for ADGRG6 receptor. May play a role in iron uptake and iron homeostasis. Soluble oligomers are toxic to cultured neuroblastoma cells and induce apoptosis (in vitro). Association with GPC1 (via its heparan sulfate chains) targets PRNP to lipid rafts. Also provides Cu(2+) or Zn(2+) for the ascorbate-mediated GPC1 deaminase degradation of its heparan sulfate side chains. This is Major prion protein (PRNP) from Sapajus apella (Brown-capped capuchin).